Consider the following 155-residue polypeptide: Interleukin-2 (155 aa).

A signal peptide spans 1 to 20; it reads MYKMQLLSCIALTLVLVANS. A glycan (O-linked (GalNAc...) threonine) is linked at Thr24. Cys79 and Cys127 are joined by a disulfide. Asn112 is a glycosylation site (N-linked (GlcNAc...) asparagine).

It belongs to the IL-2 family.

The protein resides in the secreted. In terms of biological role, cytokine produced by activated CD4-positive helper T-cells and to a lesser extend activated CD8-positive T-cells and natural killer (NK) cells that plays pivotal roles in the immune response and tolerance. Binds to a receptor complex composed of either the high-affinity trimeric IL-2R (IL2RA/CD25, IL2RB/CD122 and IL2RG/CD132) or the low-affinity dimeric IL-2R (IL2RB and IL2RG). Interaction with the receptor leads to oligomerization and conformation changes in the IL-2R subunits resulting in downstream signaling starting with phosphorylation of JAK1 and JAK3. In turn, JAK1 and JAK3 phosphorylate the receptor to form a docking site leading to the phosphorylation of several substrates including STAT5. This process leads to activation of several pathways including STAT, phosphoinositide-3-kinase/PI3K and mitogen-activated protein kinase/MAPK pathways. Functions as a T-cell growth factor and can increase NK-cell cytolytic activity as well. Promotes strong proliferation of activated B-cells and subsequently immunoglobulin production. Plays a pivotal role in regulating the adaptive immune system by controlling the survival and proliferation of regulatory T-cells, which are required for the maintenance of immune tolerance. Moreover, participates in the differentiation and homeostasis of effector T-cell subsets, including Th1, Th2, Th17 as well as memory CD8-positive T-cells. The polypeptide is Interleukin-2 (IL2) (Canis lupus familiaris (Dog)).